Here is a 206-residue protein sequence, read N- to C-terminus: MKIDITSLNGDSAGSIDLDDSIFGLEPRQDLIARMVRYQLAKRRAGTHKTKGRAEIARTGKKLYKQKGTGSARHGSARVPQFRGGGRAFGPVVRSHAHDLPKKVRALALKHALSAKAQGGGIIVWSDASATDAKTKALKASFAKAGLLSALIIDGAEVEQNFALAARNIPQIDVLPVQGINVYDILRREKLVLTRAAIDALEARFK.

Belongs to the universal ribosomal protein uL4 family. As to quaternary structure, part of the 50S ribosomal subunit.

Its function is as follows. One of the primary rRNA binding proteins, this protein initially binds near the 5'-end of the 23S rRNA. It is important during the early stages of 50S assembly. It makes multiple contacts with different domains of the 23S rRNA in the assembled 50S subunit and ribosome. Forms part of the polypeptide exit tunnel. The polypeptide is Large ribosomal subunit protein uL4 (Methylocella silvestris (strain DSM 15510 / CIP 108128 / LMG 27833 / NCIMB 13906 / BL2)).